A 401-amino-acid chain; its full sequence is Lsg locus putative protein 1 (401 aa).

The next 11 membrane-spanning stretches (helical) occupy residues Val-8 to Leu-28, Gly-36 to Leu-56, Ile-87 to Ala-107, Ser-132 to Leu-152, Lys-162 to Tyr-182, Ala-199 to Leu-219, Leu-237 to Leu-257, Trp-282 to Glu-302, Phe-320 to Leu-340, Cys-352 to Ile-372, and Tyr-374 to Thr-394.

Belongs to the polysaccharide synthase family. HI_0867/HI_1700 subfamily.

It localises to the cell membrane. This Haemophilus influenzae (strain ATCC 51907 / DSM 11121 / KW20 / Rd) protein is Lsg locus putative protein 1.